Here is a 202-residue protein sequence, read N- to C-terminus: Na(+)-translocating NADH-quinone reductase subunit E (202 aa).

6 consecutive transmembrane segments (helical) span residues 5–25, 35–55, 81–101, 114–134, 144–164, and 180–200; these read VSLF…FLGM, VSTA…TVPL, FLGL…LEMF, GVFL…LFMV, LTYG…LAGI, and LGIT…FGGM.

The protein belongs to the NqrDE/RnfAE family. As to quaternary structure, composed of six subunits; NqrA, NqrB, NqrC, NqrD, NqrE and NqrF.

It is found in the cell inner membrane. It catalyses the reaction a ubiquinone + n Na(+)(in) + NADH + H(+) = a ubiquinol + n Na(+)(out) + NAD(+). In terms of biological role, NQR complex catalyzes the reduction of ubiquinone-1 to ubiquinol by two successive reactions, coupled with the transport of Na(+) ions from the cytoplasm to the periplasm. NqrA to NqrE are probably involved in the second step, the conversion of ubisemiquinone to ubiquinol. In Psychrobacter sp. (strain PRwf-1), this protein is Na(+)-translocating NADH-quinone reductase subunit E.